Consider the following 161-residue polypeptide: Lipoprotein signal peptidase (161 aa).

4 helical membrane-spanning segments follow: residues 8–28 (LKYF…KYLA), 40–60 (ITSF…SLLS), 67–87 (QMIM…YLII), and 91–111 (ITEK…LGNF). Residues aspartate 122 and aspartate 140 contribute to the active site. The chain crosses the membrane as a helical span at residues 136–156 (FNIADSAITCGVVILIAASLF).

It belongs to the peptidase A8 family.

The protein resides in the cell inner membrane. The enzyme catalyses Release of signal peptides from bacterial membrane prolipoproteins. Hydrolyzes -Xaa-Yaa-Zaa-|-(S,diacylglyceryl)Cys-, in which Xaa is hydrophobic (preferably Leu), and Yaa (Ala or Ser) and Zaa (Gly or Ala) have small, neutral side chains.. The protein operates within protein modification; lipoprotein biosynthesis (signal peptide cleavage). This protein specifically catalyzes the removal of signal peptides from prolipoproteins. The sequence is that of Lipoprotein signal peptidase from Francisella tularensis subsp. novicida (strain U112).